The following is a 33-amino-acid chain: Rhinophrynin-33 (33 aa).

In terms of tissue distribution, expressed by the skin glands.

It is found in the secreted. Functionally, non-cytotoxic peptide with immunosuppressive and insulinotropic effects. Induces an increased production of the anti-inflammatory cytokine IL-10 and inhibits production of the pro-inflammatory cytokines TNF-alpha and IL-1beta, when incubated with mouse peritoneal cells. Does not display growth-inhibitory activity against the Gram-positive S.epidermidis and Gram-negative E.coli bacteria and against the opportunistic yeast pathogen C.parapsilosis (MIC&gt;128 uM). In addition, it lacks cytotoxic activity against mouse erythrocytes (LC(50)&gt;500 uM) and A549 human non-small cell lung adenocarcinoma cells (LC(50)&gt;100 uM). Moderately stimulates insulin release from rat clonal beta-cells and mouse pancreatic islets. Its function is as follows. Non-cytotoxic peptide with immunosuppressive but without insulinotropic effects. Inhibits production of the pro-inflammatory cytokines TNF-alpha, but has no effect on IL-10 and IL-1beta production, when incubated with mouse peritoneal cells. Has no activity of stimulation of insulin release. This Rhinophrynus dorsalis (Mexican burrowing toad) protein is Rhinophrynin-33.